Here is a 389-residue protein sequence, read N- to C-terminus: Probable tRNA sulfurtransferase (389 aa).

The THUMP domain occupies 57–165 (DEALDRLSKI…EDETYIYHRV (109 aa)). ATP is bound by residues 183–184 (LL), K267, G289, and Q298.

This sequence belongs to the ThiI family.

The protein localises to the cytoplasm. It carries out the reaction [ThiI sulfur-carrier protein]-S-sulfanyl-L-cysteine + a uridine in tRNA + 2 reduced [2Fe-2S]-[ferredoxin] + ATP + H(+) = [ThiI sulfur-carrier protein]-L-cysteine + a 4-thiouridine in tRNA + 2 oxidized [2Fe-2S]-[ferredoxin] + AMP + diphosphate. It catalyses the reaction [ThiS sulfur-carrier protein]-C-terminal Gly-Gly-AMP + S-sulfanyl-L-cysteinyl-[cysteine desulfurase] + AH2 = [ThiS sulfur-carrier protein]-C-terminal-Gly-aminoethanethioate + L-cysteinyl-[cysteine desulfurase] + A + AMP + 2 H(+). Its pathway is cofactor biosynthesis; thiamine diphosphate biosynthesis. Its function is as follows. Catalyzes the ATP-dependent transfer of a sulfur to tRNA to produce 4-thiouridine in position 8 of tRNAs, which functions as a near-UV photosensor. Also catalyzes the transfer of sulfur to the sulfur carrier protein ThiS, forming ThiS-thiocarboxylate. This is a step in the synthesis of thiazole, in the thiamine biosynthesis pathway. The sulfur is donated as persulfide by IscS. The protein is Probable tRNA sulfurtransferase of Methanothermobacter thermautotrophicus (strain ATCC 29096 / DSM 1053 / JCM 10044 / NBRC 100330 / Delta H) (Methanobacterium thermoautotrophicum).